The following is a 1273-amino-acid chain: Lysine-specific histone demethylase 2 (1273 aa).

Residues 199–230 are compositionally biased toward polar residues; it reads ENFFDANSPSSQQFPSTYPSRSQNPLSSSGDG. The disordered stretch occupies residues 199-237; that stretch reads ENFFDANSPSSQQFPSTYPSRSQNPLSSSGDGSTAIHAG. A coiled-coil region spans residues 247-307; sequence FSNYPYPLDA…LSKSVDNAVL (61 aa). In terms of domain architecture, SWIRM spans 394-490; that stretch reads AAEAARKCNL…YGCLSFDSSF (97 aa). FAD-binding positions include 509 to 551, Thr-517, Glu-550, Arg-558, and 572 to 573; these read IAVV…ILEA and TQ. Positions 542–1198 are demethylase activity; the sequence is LPPKVIILEA…GKILRYQRLT (657 aa). Residues 571–596 are disordered; it reads ATQINHHTSNSNSISSNSTSLNPKDV. Positions 574–590 are enriched in low complexity; sequence INHHTSNSNSISSNSTS. The stretch at 681-767 forms a coiled coil; that stretch reads SVRISWISQF…NTVDTDFSKD (87 aa). The segment at residues 1115 to 1195 is a DNA-binding region (HMG box); sequence SKPNANPFLL…AYAGKILRYQ (81 aa). FAD contacts are provided by residues Asp-1147 and 1156-1157; that span reads ET. The interval 1215–1273 is disordered; that stretch reads KCQDEPIPDDEARLFMQAQREEEQRKQTQDDNISKSREASDEEYHDDGSSDSGYNGTRY. Basic and acidic residues predominate over residues 1233–1253; that stretch reads QREEEQRKQTQDDNISKSREA. The segment covering 1264 to 1273 has biased composition (polar residues); the sequence is SDSGYNGTRY.

The protein belongs to the flavin monoamine oxidase family. Component of the SWM histone demethylase complex composed of at least lsd1, lsd2, phf1 and phf2. Interacts directly with lsd1. The cofactor is FAD.

Its subcellular location is the nucleus. Functionally, catalytic component of the SWM histone demethylase complex that specifically demethylates H3K9me2, a specific tag for epigenetic transcriptional activation, thereby acting as a corepressor. Acts by oxidizing the substrate by FAD to generate the corresponding imine that is subsequently hydrolyzed. Has a role in regulating heterochromatin propagation and euchromatic transcription. Also has a gene activating role. The chain is Lysine-specific histone demethylase 2 (lsd2) from Schizosaccharomyces pombe (strain 972 / ATCC 24843) (Fission yeast).